A 1940-amino-acid polypeptide reads, in one-letter code: Myosin-2 (1940 aa).

In terms of domain architecture, Myosin N-terminal SH3-like spans 33–82 (DAKTSVFVAEPKESFVKGTIQSREGGKVTVKTEGGATLTVKEDQVFPMNP). Residues T64 and T69 each carry the phosphothreonine modification. The Myosin motor domain maps to 86-783 (DKIEDMAMMT…LLGLLEEMRD (698 aa)). K130 is subject to N6,N6,N6-trimethyllysine. 179–186 (GESGAGKT) provides a ligand contact to ATP. Residue Y389 is modified to Phosphotyrosine. Position 392 is a phosphoserine (S392). A Phosphothreonine modification is found at T419. Residue S625 is modified to Phosphoserine. An actin-binding region spans residues 660 to 682 (LNKLMTNLRSTHPHFVRCIIPNE). The residue at position 758 (H758) is a Pros-methylhistidine. Positions 762-776 (KFGHTKVFFKAGLLG) are actin-binding. Positions 786–815 (LAQLMTRTQARCRGFLARVEYQKMVERRES) constitute an IQ domain. Residues 844 to 1940 (LLKSAETEKE…EVHTKIISEE (1097 aa)) adopt a coiled-coil conformation. Residues S1093, S1097, S1163, and S1238 each carry the phosphoserine modification. At T1242 the chain carries Phosphothreonine. Residue S1244 is modified to Phosphoserine. Residues T1256 and T1287 each carry the phosphothreonine modification. Phosphoserine is present on residues S1289, S1293, S1304, and S1307. Y1465 is subject to Phosphotyrosine. Phosphothreonine is present on T1468. At Y1493 the chain carries Phosphotyrosine. Position 1496 is a phosphoserine (S1496). A Phosphothreonine modification is found at T1502. S1515 is modified (phosphoserine). Phosphothreonine is present on T1518. 6 positions are modified to phosphoserine: S1543, S1555, S1575, S1601, S1715, and S1727. Phosphothreonine occurs at positions 1731 and 1737. A disordered region spans residues 1886 to 1905 (QAEEAEEQSNTNLSKFRKLQ).

This sequence belongs to the TRAFAC class myosin-kinesin ATPase superfamily. Myosin family. As to quaternary structure, muscle myosin is a hexameric protein that consists of 2 heavy chain subunits (MHC), 2 alkali light chain subunits (MLC) and 2 regulatory light chain subunits (MLC-2). Interacts with GCSAM.

It is found in the cytoplasm. The protein resides in the myofibril. Its function is as follows. Myosins are actin-based motor molecules with ATPase activity essential for muscle contraction. This Bos taurus (Bovine) protein is Myosin-2 (MYH2).